A 74-amino-acid chain; its full sequence is Small ribosomal subunit protein bS18 (74 aa).

It belongs to the bacterial ribosomal protein bS18 family. In terms of assembly, part of the 30S ribosomal subunit. Forms a tight heterodimer with protein bS6.

Binds as a heterodimer with protein bS6 to the central domain of the 16S rRNA, where it helps stabilize the platform of the 30S subunit. The polypeptide is Small ribosomal subunit protein bS18 (Chlorobaculum tepidum (strain ATCC 49652 / DSM 12025 / NBRC 103806 / TLS) (Chlorobium tepidum)).